The sequence spans 387 residues: Galactokinase (387 aa).

33–36 (EHID) contributes to the substrate binding site. ATP contacts are provided by residues Ser-67 and 124–130 (GAGLSSS). Mg(2+) contacts are provided by Ser-130 and Glu-162. Asp-174 (proton acceptor) is an active-site residue. Tyr-224 is a binding site for substrate.

It belongs to the GHMP kinase family. GalK subfamily.

It is found in the cytoplasm. The catalysed reaction is alpha-D-galactose + ATP = alpha-D-galactose 1-phosphate + ADP + H(+). It participates in carbohydrate metabolism; galactose metabolism. In terms of biological role, catalyzes the transfer of the gamma-phosphate of ATP to D-galactose to form alpha-D-galactose-1-phosphate (Gal-1-P). The protein is Galactokinase of Clostridium perfringens (strain ATCC 13124 / DSM 756 / JCM 1290 / NCIMB 6125 / NCTC 8237 / Type A).